The chain runs to 121 residues: Basic phospholipase A2 BmjeTX-II (121 aa).

7 cysteine pairs are disulfide-bonded: C26–C114, C28–C45, C44–C95, C50–C121, C51–C88, C58–C82, and C76–C86. Y27, G29, and G31 together coordinate Ca(2+). Residue H48 is part of the active site. Residue D49 participates in Ca(2+) binding. D89 is an active-site residue.

It depends on Ca(2+) as a cofactor. In terms of tissue distribution, expressed by the venom gland.

Its subcellular location is the secreted. It catalyses the reaction a 1,2-diacyl-sn-glycero-3-phosphocholine + H2O = a 1-acyl-sn-glycero-3-phosphocholine + a fatty acid + H(+). In terms of biological role, snake venom phospholipase A2 (PLA2) that induces blockade of neuromuscular contraction in an indirectly stimulated chick biventer cervicis nerve-muscle preparation. Does not inhibit contraction of chick biventer cervicic nerve-muscle preparation in response to treatment with acetylcholine or KCl. The neuromuscular blockade is mediated by inhibitory action at the presynaptic motor nerve endings. Lyses skeletal myoblasts and myotubes in vitro, and intramuscular injection causes local muscle necrosis. Induces edema in the mouse foot pad. Induces a transient increase of IL-6 levels. PLA2 catalyzes the calcium-dependent hydrolysis of the 2-acyl groups in 3-sn-phosphoglycerides. This chain is Basic phospholipase A2 BmjeTX-II, found in Bothrops marajoensis (Marajo lancehead).